The sequence spans 1301 residues: Tyrosine-protein phosphatase 99A (1301 aa).

A signal peptide spans 1-28 (MPRPQHHALLRAMLKLLLFASIAEHCAT). The Extracellular segment spans residues 29-394 (ALPTNSSNSP…RQSHNDYNLA (366 aa)). Positions 31-63 (PTNSSNSPSSPSPFTVASLPPTTASSSSSPAVI) are disordered. A glycan (N-linked (GlcNAc...) asparagine) is linked at Asn33. Residues 33 to 63 (NSSNSPSSPSPFTVASLPPTTASSSSSPAVI) show a composition bias toward low complexity. 3 consecutive Fibronectin type-III domains span residues 66–165 (SSFD…YAAV), 173–269 (KPQN…TDVG), and 270–376 (GPSA…LQPN). N-linked (GlcNAc...) asparagine glycosylation is found at Asn176, Asn212, Asn278, Asn322, and Asn336. The chain crosses the membrane as a helical span at residues 395–415 (VLVGIIFSCFGIILIIMAFFL). The Cytoplasmic segment spans residues 416-1301 (WSRKCFHAAY…TDAQNLDIVG (886 aa)). Tyrosine-protein phosphatase domains lie at 476–741 (FSRE…LVEA) and 764–1016 (LEQQ…LSFL). The active-site Phosphocysteine intermediate is the Cys682. Over residues 1092–1106 (TALNETVSTPSTDTN) the composition is skewed to polar residues. Disordered stretches follow at residues 1092–1199 (TALN…PTIP) and 1257–1281 (VGDL…NNHI). A compositionally biased stretch (low complexity) spans 1107 to 1130 (PSLLPILSLLPPTVAPLSSSSSTT). Residues 1131-1142 (PPTPSTPTPQPP) are compositionally biased toward pro residues. Residues 1150 to 1161 (HSPSDLSHQISS) are compositionally biased toward polar residues. The span at 1162 to 1188 (TVANAASPVTPATASASAGATPTTPMT) shows a compositional bias: low complexity. Positions 1264 to 1273 (NADNSPTASP) are enriched in polar residues.

Belongs to the protein-tyrosine phosphatase family. Receptor class subfamily. As to expression, selectively expressed in a subset of axons and pioneer neurons (including aCC and RP2) in the embryo.

The protein resides in the membrane. It carries out the reaction O-phospho-L-tyrosyl-[protein] + H2O = L-tyrosyl-[protein] + phosphate. Its function is as follows. May play a key role in signal transduction and growth control. May have a role in the establishment of the intersegmental and segmental nerves. The protein is Tyrosine-protein phosphatase 99A (Ptp99A) of Drosophila melanogaster (Fruit fly).